The chain runs to 166 residues: Probable protein tyrosine phosphatase type IVA A (166 aa).

The 155-residue stretch at 10–164 (NPASLVESST…YKSKKKSSCR (155 aa)) folds into the Tyrosine-protein phosphatase domain. A disulfide bridge links C52 with C107. D75 acts as the Proton donor in catalysis. C107 serves as the catalytic Phosphocysteine intermediate. 108–113 (VAGLGR) lines the phosphate pocket. Position 113 (R113) interacts with substrate. C163 carries the post-translational modification Cysteine methyl ester. C163 carries S-farnesyl cysteine lipidation. The propeptide at 164–166 (RIM) is removed in mature form.

It belongs to the protein-tyrosine phosphatase family.

It is found in the membrane. The catalysed reaction is O-phospho-L-tyrosyl-[protein] + H2O = L-tyrosyl-[protein] + phosphate. The polypeptide is Probable protein tyrosine phosphatase type IVA A (Dictyostelium discoideum (Social amoeba)).